Consider the following 387-residue polypeptide: MALQVQAALLPSALSVPKKGNLSAVVKEPGFLSVSQKAKKPSLVVRAVATPAAPVASPGAGTSKADGKKTLRQGVVVITGASSGLGLAAAKALAETGKWHVVMACRDFLKAATAAKAAGMAAGSYTVMHLDLASLDSVRQFVDNFRRSGMPLDALVCNAAIYRPTARQPTFTADGYEMSVGVNHLGHFLLARLMLDDLKKSDYPSRRLIILGSITGNTNTLAGNVPPKAGLGDLRGLAGGLRGQNGSAMIDGAESFDGAKAYKDSKICNMLTMQEFHRRFHEETGITFASLYPGCIATTGLFREHIPLFRLLFPPFQRFVTKGFVSEAESGKRLAQVVGDPSLTKSGVYWSWNKDSASFENQLSQEASDPEKARKLWDLSEKLVGLV.

The transit peptide at M1–S35 directs the protein to the chloroplast.

The protein belongs to the short-chain dehydrogenases/reductases (SDR) family. POR subfamily.

The protein localises to the plastid. Its subcellular location is the chloroplast. It carries out the reaction chlorophyllide a + NADP(+) = protochlorophyllide a + NADPH + H(+). It participates in porphyrin-containing compound metabolism; chlorophyll biosynthesis. Functionally, phototransformation of protochlorophyllide (Pchlide) to chlorophyllide (Chlide). The protein is Protochlorophyllide reductase A, chloroplastic (PORA) of Oryza sativa subsp. japonica (Rice).